A 202-amino-acid polypeptide reads, in one-letter code: ATP-dependent Clp protease proteolytic subunit (202 aa).

Catalysis depends on serine 101, which acts as the Nucleophile. The active site involves histidine 126.

The protein belongs to the peptidase S14 family. In terms of assembly, component of the chloroplastic Clp protease core complex.

Its subcellular location is the plastid. The protein localises to the chloroplast stroma. It carries out the reaction Hydrolysis of proteins to small peptides in the presence of ATP and magnesium. alpha-casein is the usual test substrate. In the absence of ATP, only oligopeptides shorter than five residues are hydrolyzed (such as succinyl-Leu-Tyr-|-NHMec, and Leu-Tyr-Leu-|-Tyr-Trp, in which cleavage of the -Tyr-|-Leu- and -Tyr-|-Trp bonds also occurs).. In terms of biological role, cleaves peptides in various proteins in a process that requires ATP hydrolysis. Has a chymotrypsin-like activity. Plays a major role in the degradation of misfolded proteins. This chain is ATP-dependent Clp protease proteolytic subunit, found in Platanus occidentalis (Sycamore).